Here is a 658-residue protein sequence, read N- to C-terminus: Methionine--tRNA ligase (658 aa).

The 'HIGH' region motif lies at 9–19 (PYANGKAHVGH). Cysteine 140, cysteine 143, cysteine 152, and cysteine 156 together coordinate Zn(2+). Positions 322 to 326 (TFSKS) match the 'KMSKS' region motif. Residue lysine 325 participates in ATP binding. The 101-residue stretch at 558–658 (DFQKLDIRIG…KEVEPGTRVC (101 aa)) folds into the tRNA-binding domain.

This sequence belongs to the class-I aminoacyl-tRNA synthetase family. MetG type 1 subfamily. As to quaternary structure, homodimer. It depends on Zn(2+) as a cofactor.

The protein resides in the cytoplasm. The catalysed reaction is tRNA(Met) + L-methionine + ATP = L-methionyl-tRNA(Met) + AMP + diphosphate. Its function is as follows. Is required not only for elongation of protein synthesis but also for the initiation of all mRNA translation through initiator tRNA(fMet) aminoacylation. This is Methionine--tRNA ligase from Archaeoglobus fulgidus (strain ATCC 49558 / DSM 4304 / JCM 9628 / NBRC 100126 / VC-16).